The following is a 687-amino-acid chain: Acetolactate synthase catalytic subunit, mitochondrial (687 aa).

A mitochondrion-targeting transit peptide spans Met-1 to Val-90. Over residues Tyr-43–Ser-52 the composition is skewed to low complexity. The interval Tyr-43–Gln-68 is disordered. Glu-139 provides a ligand contact to thiamine diphosphate. Residues Arg-241, His-355–Arg-376, and Glu-407–Asp-426 contribute to the FAD site. Residues Gln-499–Glu-579 form a thiamine pyrophosphate binding region. 3 residues coordinate Mg(2+): Asp-550, Asn-577, and Glu-579.

It belongs to the TPP enzyme family. Homodimer. The acetolactate synthase complex contains the catalytic subunit ILV2 and the regulatory small subunit ILV6. Mg(2+) is required as a cofactor. Requires thiamine diphosphate as cofactor.

It localises to the mitochondrion. It carries out the reaction 2 pyruvate + H(+) = (2S)-2-acetolactate + CO2. It catalyses the reaction 2-oxobutanoate + pyruvate + H(+) = (S)-2-ethyl-2-hydroxy-3-oxobutanoate + CO2. It functions in the pathway amino-acid biosynthesis; L-isoleucine biosynthesis; L-isoleucine from 2-oxobutanoate: step 1/4. The protein operates within amino-acid biosynthesis; L-valine biosynthesis; L-valine from pyruvate: step 1/4. With respect to regulation, the regulatory subunit ILV6 stimulates enzymatic activity seven- to tenfold and confers sensitivity to inhibition by valine and activation by ATP. Its function is as follows. Catalytic subunit of mitochondrial acetolactate synthase, which catalyzes the first of a series of common steps in the biosynthesis of the branched-chain amino acids. Catalyzes the irreversible decarboxylation of pyruvate to a bound hydroxyethyl group that then condenses with either a second pyruvate molecule to form 2-acetolactate (AL) or with 2-ketobutyrate to form 2-aceto-2-hydroxybutyrate (AHB). The first product is the precursor for valine and leucine biosynthesis, while the second leads to isoleucine. The protein is Acetolactate synthase catalytic subunit, mitochondrial (ILV2) of Saccharomyces cerevisiae (strain ATCC 204508 / S288c) (Baker's yeast).